A 401-amino-acid chain; its full sequence is Hemorrhagic metalloproteinase-disintegrin-like kaouthiagin (401 aa).

The region spanning 14–208 (KYIEFYVIVD…DRPQCILNKP (195 aa)) is the Peptidase M12B domain. Residues Glu-17 and Asp-101 each contribute to the Ca(2+) site. Asn-112 is a glycosylation site (N-linked (GlcNAc...) asparagine). 3 disulfides stabilise this stretch: Cys-125–Cys-203, Cys-164–Cys-187, and Cys-166–Cys-171. His-149 serves as a coordination point for Zn(2+). Residue Glu-150 is part of the active site. Zn(2+) is bound by residues His-153 and His-159. Positions 203, 206, 218, 221, 223, 225, 228, and 231 each coordinate Ca(2+). A Disintegrin domain is found at 216–285 (PAICGNYFVE…ECPTDSLQRN (70 aa)). 11 cysteine pairs are disulfide-bonded: Cys-219-Cys-248, Cys-230-Cys-243, Cys-232-Cys-238, Cys-257-Cys-277, Cys-264-Cys-296, Cys-289-Cys-301, Cys-308-Cys-358, Cys-323-Cys-366, Cys-336-Cys-346, Cys-353-Cys-389, and Cys-383-Cys-394. Residues 263 to 265 (DCD) carry the D/ECD-tripeptide motif. Residues Asp-265, Leu-266, Glu-268, and Asp-280 each contribute to the Ca(2+) site.

The protein belongs to the venom metalloproteinase (M12B) family. P-III subfamily. P-IIIa sub-subfamily. Monomer. Requires Zn(2+) as cofactor. Expressed by the venom gland.

It is found in the secreted. Functionally, snake venom zinc protease that inhibits hemostasis by binding and cleaving the vWF in humans. Also has and inhibitory effect on the collagen-induced platelet aggregation. The sequence is that of Hemorrhagic metalloproteinase-disintegrin-like kaouthiagin from Naja kaouthia (Monocled cobra).